The sequence spans 285 residues: Eukaryotic translation initiation factor 2 subunit beta (285 aa).

Positions 30-69 are disordered; sequence DAAVNGKENGSGDDLFAGLKKKKKKSKSVSADAEAEKEPT. Serine 40 is modified (phosphoserine). A Phosphothreonine modification is found at threonine 69. Phosphoserine is present on residues serine 80, serine 92, and serine 112. Threonine 116 is modified (phosphothreonine). Phosphoserine is present on serine 118. The segment at 236–262 adopts a C4-type zinc-finger fold; it reads CKTCKSINTELKREQSNRLFFMVCKSC.

It belongs to the eIF-2-beta/eIF-5 family. As to quaternary structure, eukaryotic translation initiation factor 2 eIF2 is a heterotrimeric complex composed of an alpha, a beta and a gamma subunit. The factors eIF-1, eIF-2, eIF-3, TIF5/eIF-5 and methionyl-tRNAi form a multifactor complex (MFC) that may bind to the 40S ribosome. Interacts with GCD6. Interacts with GCD1. Interacts with TIF5/eIF-5. Interacts with CDC123.

It localises to the cytoplasm. The protein localises to the cytosol. Component of the eIF2 complex that functions in the early steps of protein synthesis by forming a ternary complex with GTP and initiator tRNA. This complex binds to a 40S ribosomal subunit, followed by mRNA binding to form a 43S pre-initiation complex (43S PIC). Junction of the 60S ribosomal subunit to form the 80S initiation complex is preceded by hydrolysis of the GTP bound to eIF2 and release of an eIF2-GDP binary complex. In order for eIF2 to recycle and catalyze another round of initiation, the GDP bound to eIF2 must exchange with GTP by way of a reaction catalyzed by eIF2B. This chain is Eukaryotic translation initiation factor 2 subunit beta (SUI3), found in Saccharomyces cerevisiae (strain ATCC 204508 / S288c) (Baker's yeast).